The following is a 72-amino-acid chain: MPKPEIHPTWFNETPIVCDGKPLCYIGSTKSELQVDIWLANHPFYTDSQTIIDSEGRVERFMKKYGINSTND.

This sequence belongs to the bacterial ribosomal protein bL31 family. Type A subfamily. Part of the 50S ribosomal subunit.

The protein localises to the plastid. The protein resides in the chloroplast. Binds the 23S rRNA. This chain is Large ribosomal subunit protein bL31c, found in Trieres chinensis (Marine centric diatom).